Here is a 130-residue protein sequence, read N- to C-terminus: Methylglyoxal synthase (130 aa).

One can recognise an MGS-like domain in the interval 1–130 (MSTPRIALIA…DLARRLPVKA (130 aa)). Substrate contacts are provided by residues histidine 11, lysine 15, 37 to 40 (TGTT), and 57 to 58 (SG). Catalysis depends on aspartate 63, which acts as the Proton donor/acceptor. Residue histidine 90 coordinates substrate.

The protein belongs to the methylglyoxal synthase family.

It catalyses the reaction dihydroxyacetone phosphate = methylglyoxal + phosphate. Catalyzes the formation of methylglyoxal from dihydroxyacetone phosphate. This Burkholderia thailandensis (strain ATCC 700388 / DSM 13276 / CCUG 48851 / CIP 106301 / E264) protein is Methylglyoxal synthase.